We begin with the raw amino-acid sequence, 178 residues long: Nucleoside triphosphate/diphosphate phosphatase (178 aa).

The active-site Proton donor is the arginine 23. Residues asparagine 87, aspartate 103, aspartate 105, aspartate 107, aspartate 120, and glutamate 123 each contribute to the Mg(2+) site.

This sequence belongs to the Ntdp family. The cofactor is Mg(2+).

It catalyses the reaction a ribonucleoside 5'-triphosphate + H2O = a ribonucleoside 5'-diphosphate + phosphate + H(+). The catalysed reaction is a ribonucleoside 5'-diphosphate + H2O = a ribonucleoside 5'-phosphate + phosphate + H(+). Its function is as follows. Has nucleoside phosphatase activity towards nucleoside triphosphates and nucleoside diphosphates. This Latilactobacillus sakei subsp. sakei (strain 23K) (Lactobacillus sakei subsp. sakei) protein is Nucleoside triphosphate/diphosphate phosphatase.